A 361-amino-acid polypeptide reads, in one-letter code: MKTPHILMMAAGTGGHVFPALAVSEELTKRGAMIHWLGTPNGMENGLVAPTGYPFHAIEMQGLRGKGIGRLLKMPVTLLSATMAVIKIIRGNNIDIVVGFGGYVSAPGGIAARLTKTPLIIHEQNAIAGMSNRYLAKMATKVLQAFENTFGNSQLDAKLETVGNPVRNAITGVAEPIARYDINDCSALKLLVVGGSLGAQVLNETVPKALALIESPFEVRHQCGRNNEAATQAAYDEQDLSMHKFTVQPFIDDMAAAYNWADIIVCRAGALTVTEIQNVGIAAIFVPLPSAVDDHQTANARTLTLHKAAILLPQNELTPKRLSEELAALDRPACLEMAKKGHALANRQACQHVANIIWQAL.

UDP-N-acetyl-alpha-D-glucosamine is bound by residues 13–15 (TGG), asparagine 125, arginine 167, serine 196, isoleucine 251, 270–275 (ALTVTE), and glutamine 296.

This sequence belongs to the glycosyltransferase 28 family. MurG subfamily.

It is found in the cell inner membrane. The catalysed reaction is di-trans,octa-cis-undecaprenyl diphospho-N-acetyl-alpha-D-muramoyl-L-alanyl-D-glutamyl-meso-2,6-diaminopimeloyl-D-alanyl-D-alanine + UDP-N-acetyl-alpha-D-glucosamine = di-trans,octa-cis-undecaprenyl diphospho-[N-acetyl-alpha-D-glucosaminyl-(1-&gt;4)]-N-acetyl-alpha-D-muramoyl-L-alanyl-D-glutamyl-meso-2,6-diaminopimeloyl-D-alanyl-D-alanine + UDP + H(+). The protein operates within cell wall biogenesis; peptidoglycan biosynthesis. Cell wall formation. Catalyzes the transfer of a GlcNAc subunit on undecaprenyl-pyrophosphoryl-MurNAc-pentapeptide (lipid intermediate I) to form undecaprenyl-pyrophosphoryl-MurNAc-(pentapeptide)GlcNAc (lipid intermediate II). The polypeptide is UDP-N-acetylglucosamine--N-acetylmuramyl-(pentapeptide) pyrophosphoryl-undecaprenol N-acetylglucosamine transferase (Psychrobacter cryohalolentis (strain ATCC BAA-1226 / DSM 17306 / VKM B-2378 / K5)).